We begin with the raw amino-acid sequence, 90 residues long: DNA-directed RNA polymerase subunit omega (90 aa).

The disordered stretch occupies residues 69–90 (RQEQQEQEAAELAAVSSIARNR).

This sequence belongs to the RNA polymerase subunit omega family. As to quaternary structure, the RNAP catalytic core consists of 2 alpha, 1 beta, 1 beta' and 1 omega subunit. When a sigma factor is associated with the core the holoenzyme is formed, which can initiate transcription.

It carries out the reaction RNA(n) + a ribonucleoside 5'-triphosphate = RNA(n+1) + diphosphate. Its function is as follows. Promotes RNA polymerase assembly. Latches the N- and C-terminal regions of the beta' subunit thereby facilitating its interaction with the beta and alpha subunits. This Vibrio vulnificus (strain CMCP6) protein is DNA-directed RNA polymerase subunit omega.